A 354-amino-acid polypeptide reads, in one-letter code: Protein Wnt-11 (354 aa).

Positions methionine 1–glycine 24 are cleaved as a signal peptide. N-linked (GlcNAc...) asparagine glycosylation is found at asparagine 40 and asparagine 90. Disulfide bonds link cysteine 80–cysteine 91, cysteine 130–cysteine 138, cysteine 140–cysteine 157, cysteine 209–cysteine 223, cysteine 211–cysteine 218, cysteine 283–cysteine 314, cysteine 299–cysteine 309, cysteine 313–cysteine 353, cysteine 329–cysteine 344, cysteine 331–cysteine 341, and cysteine 336–cysteine 337. Residue serine 215 is the site of O-palmitoleoyl serine; by PORCN attachment. Residues asparagine 300 and asparagine 304 are each glycosylated (N-linked (GlcNAc...) asparagine).

Belongs to the Wnt family. Palmitoleoylation is required for efficient binding to frizzled receptors. Depalmitoleoylation leads to Wnt signaling pathway inhibition.

It is found in the secreted. It localises to the extracellular space. The protein localises to the extracellular matrix. In terms of biological role, ligand for members of the frizzled family of seven transmembrane receptors. May play a role in the formation of dermal structure, both limb and feather buds. Is likely to signal over only few cell diameters. The chain is Protein Wnt-11 (WNT11) from Coturnix japonica (Japanese quail).